A 329-amino-acid polypeptide reads, in one-letter code: Peroxidase 5 (329 aa).

The signal sequence occupies residues 1-26 (MSSKRVTWLSLTWVLVFLCLSVELEA). Gln-27 is modified (pyrrolidone carboxylic acid). 4 disulfides stabilise this stretch: Cys-37-Cys-117, Cys-70-Cys-75, Cys-123-Cys-324, and Cys-202-Cys-234. The active-site Proton acceptor is the His-68. The Ca(2+) site is built by Asp-69, Val-72, Gly-74, Asp-76, and Ser-78. Pro-165 is a binding site for substrate. His-195 is a binding site for heme b. Residue Thr-196 participates in Ca(2+) binding. The N-linked (GlcNAc...) asparagine glycan is linked to Asn-213. Ser-251 and Asp-256 together coordinate Ca(2+).

Belongs to the peroxidase family. Classical plant (class III) peroxidase subfamily. Requires heme b as cofactor. It depends on Ca(2+) as a cofactor.

Its subcellular location is the secreted. It catalyses the reaction 2 a phenolic donor + H2O2 = 2 a phenolic radical donor + 2 H2O. Functionally, removal of H(2)O(2), oxidation of toxic reductants, biosynthesis and degradation of lignin, suberization, auxin catabolism, response to environmental stresses such as wounding, pathogen attack and oxidative stress. These functions might be dependent on each isozyme/isoform in each plant tissue. In Vitis vinifera (Grape), this protein is Peroxidase 5.